Consider the following 420-residue polypeptide: Fasciclin-like arabinogalactan protein 4 (420 aa).

A signal peptide spans 1 to 28; sequence MANVISISHFTLLALPYLLLLLSSTAAA. 2 FAS1 domains span residues 29-177 and 205-351; these read INVT…DSLI and GINL…SKVL. N-linked (GlcNAc...) asparagine glycosylation is found at asparagine 30, asparagine 40, asparagine 135, asparagine 154, asparagine 167, asparagine 207, asparagine 312, and asparagine 317. Positions 360 to 388 are disordered; that stretch reads SGQPVATAPPQEISLSPESSSEQPSRLVS. The segment covering 368-384 has biased composition (low complexity); that stretch reads PPQEISLSPESSSEQPS. Serine 396 carries GPI-anchor amidated serine lipidation. A propeptide spans 397-420 (removed in mature form); it reads GAVKRPLGFLVLWCWCIAFCYVLV.

Belongs to the fasciclin-like AGP family. As to expression, expressed in all plant organs and tissues, including guard cells in the leaf.

It is found in the cell membrane. May be a cell surface adhesion protein that is required for normal cell expansion. This chain is Fasciclin-like arabinogalactan protein 4 (FLA4), found in Arabidopsis thaliana (Mouse-ear cress).